Reading from the N-terminus, the 541-residue chain is Chaperonin GroEL (541 aa).

Residues 29–32 (TLGP), 86–90 (DGTTT), Gly-413, 478–480 (NAL), and Asp-494 each bind ATP.

It belongs to the chaperonin (HSP60) family. In terms of assembly, forms a cylinder of 14 subunits composed of two heptameric rings stacked back-to-back. Interacts with the co-chaperonin GroES.

The protein resides in the cytoplasm. It carries out the reaction ATP + H2O + a folded polypeptide = ADP + phosphate + an unfolded polypeptide.. Together with its co-chaperonin GroES, plays an essential role in assisting protein folding. The GroEL-GroES system forms a nano-cage that allows encapsulation of the non-native substrate proteins and provides a physical environment optimized to promote and accelerate protein folding. In Lachnoclostridium phytofermentans (strain ATCC 700394 / DSM 18823 / ISDg) (Clostridium phytofermentans), this protein is Chaperonin GroEL.